A 318-amino-acid polypeptide reads, in one-letter code: Small ribosomal subunit protein RACK1 (318 aa).

7 WD repeats span residues 11-44, 65-95, 107-137, 150-182, 194-224, 235-264, and 282-315; these read GHRGWVTSLACPQTPETATKVVSTSRDKTLLSWG, GHSAFVSDVALSNNGNFAVSASWDHSLRLWN, GHTKDVLSVAFSPDNRQIVSGGRDNALRVWN, AHTDWVSCVRFSPSLDAPVIVSGGWDNLVKVWD, GHTNYVTSVTVSPDGSLCASSDKDGVARLWD, AAGAPINQICFSPNRYWMCAATEKGIRIFD, and KKIVPECVSIAWSADGSTLYSGYTDNVIRVWGVS.

Belongs to the WD repeat G protein beta family. Ribosomal protein RACK1 subfamily.

This Trypanosoma brucei brucei protein is Small ribosomal subunit protein RACK1.